Reading from the N-terminus, the 188-residue chain is Ribosome-recycling factor (188 aa).

The protein belongs to the RRF family.

It localises to the cytoplasm. Its function is as follows. Responsible for the release of ribosomes from messenger RNA at the termination of protein biosynthesis. May increase the efficiency of translation by recycling ribosomes from one round of translation to another. The protein is Ribosome-recycling factor of Akkermansia muciniphila (strain ATCC BAA-835 / DSM 22959 / JCM 33894 / BCRC 81048 / CCUG 64013 / CIP 107961 / Muc).